The chain runs to 374 residues: MADIDFPAELRALRALRATYDSIERVIDADSLRKDIAVLSEQAGVPDLWDNPAEAQKVTSKLSHAQSKLERLETLTARIDDLEVLVELAESEHDEDSLAEASKELVSLQKSLQELEVVTLLAGEYDEREAVVTIRSGAGGVDAADFAEMLLRMYLRWAERHGYPTSVLDTSYAEEAGLKSATFEVKAPYAFGTLSVEAGTHRLVRISPFDNQGRRQTSFAAVEVIPLIEQTDSIEIPDNDIRVDVFRSSGPGGQSVNTTDSAVRLTHLPTGTVVSMQNEKSQLQNRAAATRVLQSRLLLLKKQQEDAEKKALAGDVKASWGDQMRSYVLNPYQMVKDLRTEHEVGNTSGVLDGDIDDFIDAGIRWRANNRNAAE.

Residue glutamine 254 is modified to N5-methylglutamine.

The protein belongs to the prokaryotic/mitochondrial release factor family. In terms of processing, methylated by PrmC. Methylation increases the termination efficiency of RF2.

It is found in the cytoplasm. Functionally, peptide chain release factor 2 directs the termination of translation in response to the peptide chain termination codons UGA and UAA. The protein is Peptide chain release factor 2 of Renibacterium salmoninarum (strain ATCC 33209 / DSM 20767 / JCM 11484 / NBRC 15589 / NCIMB 2235).